The following is a 173-amino-acid chain: Mesencephalic astrocyte-derived neurotrophic factor homolog (173 aa).

A signal peptide spans 1 to 22 (MKTTHLVLVLCFLAGVAQTTLA). Disulfide bonds link Cys-28–Cys-114, Cys-31–Cys-103, Cys-61–Cys-72, and Cys-148–Cys-151.

This sequence belongs to the ARMET family.

It localises to the secreted. Required during the maturation of the embryonic nervous system for maintenance of neuronal and cuticular connectivity. Essential for maintenance of dopaminergic neurons and dopamine levels. In Drosophila persimilis (Fruit fly), this protein is Mesencephalic astrocyte-derived neurotrophic factor homolog.